The chain runs to 118 residues: Large ribosomal subunit protein bL20 (118 aa).

It belongs to the bacterial ribosomal protein bL20 family.

In terms of biological role, binds directly to 23S ribosomal RNA and is necessary for the in vitro assembly process of the 50S ribosomal subunit. It is not involved in the protein synthesizing functions of that subunit. The chain is Large ribosomal subunit protein bL20 from Lachnoclostridium phytofermentans (strain ATCC 700394 / DSM 18823 / ISDg) (Clostridium phytofermentans).